Reading from the N-terminus, the 534-residue chain is Chaperonin GroEL (534 aa).

Residues 29–32, 86–90, Gly413, and Asp494 contribute to the ATP site; these read TAGP and DGTTT.

It belongs to the chaperonin (HSP60) family. Forms a cylinder of 14 subunits composed of two heptameric rings stacked back-to-back. Interacts with the co-chaperonin GroES.

The protein resides in the cytoplasm. It catalyses the reaction ATP + H2O + a folded polypeptide = ADP + phosphate + an unfolded polypeptide.. Functionally, together with its co-chaperonin GroES, plays an essential role in assisting protein folding. The GroEL-GroES system forms a nano-cage that allows encapsulation of the non-native substrate proteins and provides a physical environment optimized to promote and accelerate protein folding. The protein is Chaperonin GroEL of Mycoplasmoides gallisepticum (strain R(low / passage 15 / clone 2)) (Mycoplasma gallisepticum).